Reading from the N-terminus, the 315-residue chain is Transaldolase (315 aa).

Residue Lys125 is the Schiff-base intermediate with substrate of the active site.

This sequence belongs to the transaldolase family. Type 1 subfamily. Homodimer.

The protein localises to the cytoplasm. The enzyme catalyses D-sedoheptulose 7-phosphate + D-glyceraldehyde 3-phosphate = D-erythrose 4-phosphate + beta-D-fructose 6-phosphate. It functions in the pathway carbohydrate degradation; pentose phosphate pathway; D-glyceraldehyde 3-phosphate and beta-D-fructose 6-phosphate from D-ribose 5-phosphate and D-xylulose 5-phosphate (non-oxidative stage): step 2/3. Transaldolase is important for the balance of metabolites in the pentose-phosphate pathway. In Paracidovorax citrulli (strain AAC00-1) (Acidovorax citrulli), this protein is Transaldolase.